The following is a 279-amino-acid chain: Phosphatidylglycerol--prolipoprotein diacylglyceryl transferase (279 aa).

7 helical membrane-spanning segments follow: residues 22 to 42, 58 to 78, 89 to 109, 128 to 148, 195 to 215, 223 to 243, and 256 to 276; these read SAHW…WSSI, ILYF…VIFY, FIFK…GSII, FLVP…FING, ISQL…LNIF, GYMS…AEFF, and YISL…ILII. Residue Arg141 coordinates a 1,2-diacyl-sn-glycero-3-phospho-(1'-sn-glycerol).

It belongs to the Lgt family.

It localises to the cell membrane. It carries out the reaction L-cysteinyl-[prolipoprotein] + a 1,2-diacyl-sn-glycero-3-phospho-(1'-sn-glycerol) = an S-1,2-diacyl-sn-glyceryl-L-cysteinyl-[prolipoprotein] + sn-glycerol 1-phosphate + H(+). It participates in protein modification; lipoprotein biosynthesis (diacylglyceryl transfer). Its function is as follows. Catalyzes the transfer of the diacylglyceryl group from phosphatidylglycerol to the sulfhydryl group of the N-terminal cysteine of a prolipoprotein, the first step in the formation of mature lipoproteins. This chain is Phosphatidylglycerol--prolipoprotein diacylglyceryl transferase, found in Wigglesworthia glossinidia brevipalpis.